The chain runs to 212 residues: MNLLIMGLPGAGKGTQAAKIVEKFGLAHISTGDMFRAAMANQTEMGTLAKSFIDKGELVPDEVTNGIVKERLSESDITKKGFLLDGYPRTIEQAHALDEILSKLNLKLDGVINIDVDPACLVERLSGRIINRKTGETYHKVFNPPADYNEDDYYQREDDKPETVKRRLDVNIAQGHPIIEYYRNKGLVYDIEGNQDINLVFETIAKVLANLS.

Residue 10-15 (GAGKGT) participates in ATP binding. The NMP stretch occupies residues 30 to 59 (STGDMFRAAMANQTEMGTLAKSFIDKGELV). AMP is bound by residues T31, R36, 57 to 59 (ELV), 86 to 89 (GYPR), and Q93. Positions 127–159 (GRIINRKTGETYHKVFNPPADYNEDDYYQREDD) are LID. ATP-binding positions include R128 and 137-138 (TY). Residues R156 and R167 each coordinate AMP. Residue Q195 participates in ATP binding.

The protein belongs to the adenylate kinase family. In terms of assembly, monomer.

It localises to the cytoplasm. The catalysed reaction is AMP + ATP = 2 ADP. It functions in the pathway purine metabolism; AMP biosynthesis via salvage pathway; AMP from ADP: step 1/1. Its function is as follows. Catalyzes the reversible transfer of the terminal phosphate group between ATP and AMP. Plays an important role in cellular energy homeostasis and in adenine nucleotide metabolism. This is Adenylate kinase from Streptococcus mutans serotype c (strain ATCC 700610 / UA159).